We begin with the raw amino-acid sequence, 233 residues long: 2-C-methyl-D-erythritol 4-phosphate cytidylyltransferase (233 aa).

The protein belongs to the IspD/TarI cytidylyltransferase family. IspD subfamily.

The catalysed reaction is 2-C-methyl-D-erythritol 4-phosphate + CTP + H(+) = 4-CDP-2-C-methyl-D-erythritol + diphosphate. It functions in the pathway isoprenoid biosynthesis; isopentenyl diphosphate biosynthesis via DXP pathway; isopentenyl diphosphate from 1-deoxy-D-xylulose 5-phosphate: step 2/6. In terms of biological role, catalyzes the formation of 4-diphosphocytidyl-2-C-methyl-D-erythritol from CTP and 2-C-methyl-D-erythritol 4-phosphate (MEP). In Thiobacillus denitrificans (strain ATCC 25259 / T1), this protein is 2-C-methyl-D-erythritol 4-phosphate cytidylyltransferase.